The chain runs to 359 residues: Peptide chain release factor 1 (359 aa).

The residue at position 235 (glutamine 235) is an N5-methylglutamine. A disordered region spans residues 283–309 (QKAESERSQARRSQVGSGDRSERIRTY).

This sequence belongs to the prokaryotic/mitochondrial release factor family. Methylated by PrmC. Methylation increases the termination efficiency of RF1.

The protein localises to the cytoplasm. Its function is as follows. Peptide chain release factor 1 directs the termination of translation in response to the peptide chain termination codons UAG and UAA. This is Peptide chain release factor 1 from Brucella abortus (strain S19).